We begin with the raw amino-acid sequence, 89 residues long: Barrier-to-autointegration factor (89 aa).

Met1 bears the N-acetylmethionine mark. Thr2 carries the post-translational modification N-acetylthreonine; in Barrier-to-autointegration factor, N-terminally processed. Phosphothreonine; by VRK1 and VRK2 occurs at positions 2 and 3. Ser4 carries the phosphoserine; by VRK1 and VRK2 modification. The HhH domain occupies 20–35; that stretch reads VGSLAGIGEVLGKKLE.

Belongs to the BAF family. As to quaternary structure, homodimer. Heterodimerizes with BANF2. Interacts with ANKLE2/LEM4, leading to decreased phosphorylation by VRK1 and promoting dephosphorylation by protein phosphatase 2A (PP2A). Binds non-specifically to double-stranded DNA, and is found as a hexamer or dodecamer upon DNA binding. Binds to LEM domain-containing nuclear proteins such as LEMD3/MAN1, TMPO/LAP2 and EMD (emerin). Interacts with ANKLE1 (via LEM domain); the interaction may favor BANF1 dimerization. Interacts with CRX and LMNA (lamin-A). Binds linker histone H1.1 and core histones H3. Interacts with LEMD2 (via LEM domain). Interacts with PARP1; interaction takes place in response to oxidative DNA damage. Post-translationally, ser-4 is the major site of phosphorylation as compared to Thr-2 and Thr-3. Phosphorylation on Thr-2; Thr-3 and Ser-4 disrupts its ability to bind DNA and reduces its ability to bind LEM domain-containing proteins. Non phosphorylated BAF seems to enhance binding between EMD and LMNA. Dephosphorylated by protein phosphatase 2A (PP2A) following interaction with ANKLE2/LEM4 during mitotic exit, leading to mitotic nuclear envelope reassembly.

Its subcellular location is the nucleus. The protein localises to the chromosome. It localises to the nucleus envelope. The protein resides in the cytoplasm. Non-specific DNA-binding protein that plays key roles in mitotic nuclear reassembly, chromatin organization, DNA damage response, gene expression and intrinsic immunity against foreign DNA. Contains two non-specific double-stranded DNA (dsDNA)-binding sites which promote DNA cross-bridging. Plays a key role in nuclear membrane reformation at the end of mitosis by driving formation of a single nucleus in a spindle-independent manner. Transiently cross-bridges anaphase chromosomes via its ability to bridge distant DNA sites, leading to the formation of a dense chromatin network at the chromosome ensemble surface that limits membranes to the surface. Also acts as a negative regulator of innate immune activation by restricting CGAS activity toward self-DNA upon acute loss of nuclear membrane integrity. Outcompetes CGAS for DNA-binding, thereby preventing CGAS activation and subsequent damaging autoinflammatory responses. Also involved in DNA damage response: interacts with PARP1 in response to oxidative stress, thereby inhibiting the ADP-ribosyltransferase activity of PARP1. Involved in the recognition of exogenous dsDNA in the cytosol: associates with exogenous dsDNA immediately after its appearance in the cytosol at endosome breakdown and is required to avoid autophagy. In case of poxvirus infection, has an antiviral activity by blocking viral DNA replication. In Bos taurus (Bovine), this protein is Barrier-to-autointegration factor (BANF1).